The following is a 364-amino-acid chain: Succinate--CoA ligase [ADP-forming] subunit beta (364 aa).

Positions 9–229 (KNIFKKYGIP…EFEEYKNKEK (221 aa)) constitute an ATP-grasp domain. ATP-binding positions include K43, 50-52 (GRG), E89, L92, and E97. Mg(2+)-binding residues include N189 and D203. Residues N246 and 303 to 305 (GIT) contribute to the substrate site.

This sequence belongs to the succinate/malate CoA ligase beta subunit family. In terms of assembly, heterotetramer of two alpha and two beta subunits. Mg(2+) is required as a cofactor.

It carries out the reaction succinate + ATP + CoA = succinyl-CoA + ADP + phosphate. It catalyses the reaction GTP + succinate + CoA = succinyl-CoA + GDP + phosphate. It functions in the pathway carbohydrate metabolism; tricarboxylic acid cycle; succinate from succinyl-CoA (ligase route): step 1/1. Functionally, succinyl-CoA synthetase functions in the citric acid cycle (TCA), coupling the hydrolysis of succinyl-CoA to the synthesis of either ATP or GTP and thus represents the only step of substrate-level phosphorylation in the TCA. The beta subunit provides nucleotide specificity of the enzyme and binds the substrate succinate, while the binding sites for coenzyme A and phosphate are found in the alpha subunit. In Methanocaldococcus jannaschii (strain ATCC 43067 / DSM 2661 / JAL-1 / JCM 10045 / NBRC 100440) (Methanococcus jannaschii), this protein is Succinate--CoA ligase [ADP-forming] subunit beta.